The chain runs to 508 residues: Photosystem II CP47 reaction center protein (508 aa).

Helical transmembrane passes span 21–36, 101–115, 140–156, 203–218, 237–252, and 457–472; these read SVHI…WAGS, IVFS…IWHW, GIHL…FGAF, IAAG…FHLS, VLSS…AFVV, and SFAL…HGSR.

The protein belongs to the PsbB/PsbC family. PsbB subfamily. PSII is composed of 1 copy each of membrane proteins PsbA, PsbB, PsbC, PsbD, PsbE, PsbF, PsbH, PsbI, PsbJ, PsbK, PsbL, PsbM, PsbT, PsbX, PsbY, PsbZ, Psb30/Ycf12, at least 3 peripheral proteins of the oxygen-evolving complex and a large number of cofactors. It forms dimeric complexes. The cofactor is Binds multiple chlorophylls. PSII binds additional chlorophylls, carotenoids and specific lipids..

It localises to the plastid. It is found in the chloroplast thylakoid membrane. Its function is as follows. One of the components of the core complex of photosystem II (PSII). It binds chlorophyll and helps catalyze the primary light-induced photochemical processes of PSII. PSII is a light-driven water:plastoquinone oxidoreductase, using light energy to abstract electrons from H(2)O, generating O(2) and a proton gradient subsequently used for ATP formation. The chain is Photosystem II CP47 reaction center protein from Capsella bursa-pastoris (Shepherd's purse).